The following is a 528-amino-acid chain: Protein WHAT'S THIS FACTOR 1 homolog, chloroplastic (528 aa).

A chloroplast-targeting transit peptide spans methionine 1–arginine 73. The PORR domain maps to lysine 80 to serine 408. The tract at residues proline 410–tryptophan 528 is disordered. The segment covering proline 418–glutamate 428 has biased composition (basic and acidic residues). Acidic residues predominate over residues isoleucine 429–aspartate 491.

Its subcellular location is the plastid. The protein localises to the chloroplast. In terms of biological role, RNA-binding protein involved in group II intron splicing. Binds specific group II introns and promotes their splicing. Functions in the context of a heterodimer with the ribonuclease III domain-containing protein RNC1. In Arabidopsis thaliana (Mouse-ear cress), this protein is Protein WHAT'S THIS FACTOR 1 homolog, chloroplastic.